The sequence spans 425 residues: Testicular acid phosphatase (425 aa).

An N-terminal signal peptide occupies residues 1–27 (MAEPGSQGHTVGPLLLLLLLLLPRALP). Topologically, residues 28–392 (EGPLLFVALV…EPASPPATVP (365 aa)) are extracellular. His-40 (nucleophile) is an active-site residue. 3 disulfides stabilise this stretch: Cys-158/Cys-378, Cys-213/Cys-311, and Cys-353/Cys-357. Asp-288 functions as the Proton donor in the catalytic mechanism. The chain crosses the membrane as a helical span at residues 393–413 (LLAGAVAVLAVLSLGLGLLAW). The Cytoplasmic segment spans residues 414–425 (RPRCLRALGGTV).

It belongs to the histidine acid phosphatase family. In terms of assembly, homodimer. Post-translationally, glycosylated.

Its subcellular location is the membrane. It carries out the reaction a phosphate monoester + H2O = an alcohol + phosphate. In terms of biological role, may dephosphorylate receptor tyrosine-protein kinase ERBB4 and inhibits its ligand-induced proteolytic cleavage. May play a role in odontogenesis. This is Testicular acid phosphatase from Mus musculus (Mouse).